The sequence spans 156 residues: Anaerobic nitrite reductase HB2 (156 aa).

The Globin domain maps to G2 to H151. A Homodimerization motif is present at residues E35 to V39. Residues S45, K59, H63, and H98 each coordinate heme b. Residues D105–R117 carry the Homodimerization motif.

This sequence belongs to the plant globin family. In terms of assembly, homodimer. Requires heme b as cofactor.

It localises to the cytoplasm. Its subcellular location is the nucleus. The enzyme catalyses Fe(III)-heme b-[protein] + nitric oxide + H2O = Fe(II)-heme b-[protein] + nitrite + 2 H(+). Functionally, phytoglobin that reduces nitrite to nitric oxide (NO) under anoxic conditions (e.g. during flooding or in waterlogged soil). May not function as an oxygen storage or transport protein. Has an unusually high affinity for O(2) through an hexacoordinate heme iron because of a very low dissociation constant. In Solanum lycopersicum (Tomato), this protein is Anaerobic nitrite reductase HB2.